A 223-amino-acid polypeptide reads, in one-letter code: Ribosomal RNA small subunit methyltransferase G (223 aa).

S-adenosyl-L-methionine contacts are provided by residues glycine 83, leucine 88, 134–135 (AE), and arginine 152.

Belongs to the methyltransferase superfamily. RNA methyltransferase RsmG family.

The protein resides in the cytoplasm. Specifically methylates the N7 position of guanine in position 518 of 16S rRNA. The protein is Ribosomal RNA small subunit methyltransferase G of Corynebacterium diphtheriae (strain ATCC 700971 / NCTC 13129 / Biotype gravis).